A 240-amino-acid chain; its full sequence is DUP240 protein DFP1 (240 aa).

The interval 1–29 (MQPYLKKNTHATDDPKASPLKEGSPDNPE) is disordered. Helical transmembrane passes span 61 to 81 (IMINFLLFVVTILATLTDIWF) and 84 to 104 (VLSPAMVIRICLGGSMVVLQI).

Belongs to the DUP/COS family.

The protein resides in the membrane. This is DUP240 protein DFP1 from Saccharomyces cerevisiae (Baker's yeast).